The chain runs to 234 residues: 2,3,4,5-tetrahydropyridine-2,6-dicarboxylate N-acetyltransferase (234 aa).

This sequence belongs to the transferase hexapeptide repeat family. DapH subfamily.

The enzyme catalyses (S)-2,3,4,5-tetrahydrodipicolinate + acetyl-CoA + H2O = L-2-acetamido-6-oxoheptanedioate + CoA. It participates in amino-acid biosynthesis; L-lysine biosynthesis via DAP pathway; LL-2,6-diaminopimelate from (S)-tetrahydrodipicolinate (acetylase route): step 1/3. Catalyzes the transfer of an acetyl group from acetyl-CoA to tetrahydrodipicolinate. This is 2,3,4,5-tetrahydropyridine-2,6-dicarboxylate N-acetyltransferase from Lacticaseibacillus paracasei (strain ATCC 334 / BCRC 17002 / CCUG 31169 / CIP 107868 / KCTC 3260 / NRRL B-441) (Lactobacillus paracasei).